The sequence spans 406 residues: Tubby-like F-box protein 11 (406 aa).

An F-box domain is found at 53 to 108 (SCWTQLPPELLREVLARVEESEGWWPRRRDVVACAGVCRSWRGIVREIVRTPEASG).

This sequence belongs to the TUB family. As to expression, ubiquitous.

The chain is Tubby-like F-box protein 11 (TULP11) from Oryza sativa subsp. japonica (Rice).